Reading from the N-terminus, the 126-residue chain is UPF0538 protein C2orf76 homolog (126 aa).

It belongs to the UPF0538 family.

The sequence is that of UPF0538 protein C2orf76 homolog from Danio rerio (Zebrafish).